Consider the following 509-residue polypeptide: Maturase K (509 aa).

It belongs to the intron maturase 2 family. MatK subfamily.

Its subcellular location is the plastid. The protein resides in the chloroplast. Its function is as follows. Usually encoded in the trnK tRNA gene intron. Probably assists in splicing its own and other chloroplast group II introns. The chain is Maturase K from Jacaranda mimosifolia (Jacaranda).